Here is an 85-residue protein sequence, read N- to C-terminus: Homeobox protein knotted-1-like 8 (85 aa).

The ELK domain maps to 1–21 (ELKHQLLRKYGGYLGGLRQEF). Positions 22–85 (SKRKKKGKLP…NQRKRHWKPA (64 aa)) form a DNA-binding region, homeobox; TALE-type.

The protein belongs to the TALE/KNOX homeobox family. As to expression, strongly expressed in ear inflorescence primordia and shoot meristem. Weakly expressed in embryos. Absent from leaves.

It is found in the nucleus. Probably binds to the DNA sequence 5'-TGAC-3'. The chain is Homeobox protein knotted-1-like 8 (KNOX8) from Zea mays (Maize).